We begin with the raw amino-acid sequence, 271 residues long: MTLLTVKHLTITDTWTDQPLVSDVNFTLTKGETLGVIGESGSGKSITCKSIIGLNPERLGVTGEIIFDGTSMLSLSESQRKKYRGKDIAMVMQQGSRAFDPSTTVGKQMFETMKVHTSMSTQEIEKTLIEYMDYLSLKDPKRILKSYPYMLSGGMLQRLMIALALALKPKLIIADEPTTALDTITQYDVLEAFIDIKKHFDCAMIFISHDLTVINKIADRVVVMKNGQLIEHGTRESVLHHPEHVYTKYLLSTKKKINDHFKHVMRGDVHD.

Residues V6–L251 form the ABC transporter domain. G38–S45 is a binding site for ATP.

Belongs to the ABC transporter superfamily. As to quaternary structure, the complex is composed of two ATP-binding proteins (CntD and CntF), two transmembrane proteins (CntB and CntC) and a solute-binding protein (CntA).

The protein resides in the cell membrane. In terms of biological role, part of the ABC transporter complex CntABCDF (Opp1) involved in the uptake of metal in complex with the metallophore staphylopine (StP). May be involved in the import of a large array of divalent metals ions such as nickel, cobalt, zinc, copper and iron. Probably responsible for energy coupling to the transport system. The sequence is that of Metal-staphylopine import system ATP-binding protein CntD from Staphylococcus aureus (strain Mu50 / ATCC 700699).